The primary structure comprises 555 residues: MAGLVLSNDTEAKISGDCKRGGCITFPFMIATLLGISVTSYGWVLNLIVFLIEEYNIKSIAAAQISNIVNGCLSMLPVVTAILADSFFGNIPVISASAFISLLGIFLLTLISSFENLRPRPCETGSILCQSPSKLHLGVLYAALALVTAGTSGTRVALASAGANQYDKPRDKGSFFNWYFLTVNTGAIISATAIVYTQENASWRLGFGLCAAANLISFIVFISGKRFYKHDKPMGSPFTSLIRVLVAAILKIKVVTSSKEEDYHREVEKESKTCIGMPSKSFRFLNRAALKSEKDLNQEDGLCHNPWRLCSVEEVEDFKSVLRVLPLWLAILFVGTSIGVQASMTVLQALVTDRGLDSKFKVPAGSLQVIVLISSCVFLVLNNWTIYPIYQKITHKQLTPLQQVGIGQVFNILSMAISAIVEAKRLKTVENEHPMSVLWLLPPLVIVGIGDAFHYMANVAVFYGEFPESMRNTATSVTSVAFGISFYLSTALINLIQRTTAWLPDDINHGRVDNVYWVLVIGGVLNLGYFFVCSWYFTYRKIQDDNRQDPKDVTN.

12 helical membrane passes run 32 to 52, 68 to 88, 91 to 111, 127 to 147, 175 to 195, 205 to 225, 324 to 344, 369 to 389, 401 to 421, 437 to 457, 476 to 496, and 517 to 537; these read TLLG…VFLI, IVNG…DSFF, IPVI…LTLI, ILCQ…LALV, FFNW…TAIV, LGFG…ISGK, VLPL…QASM, VIVL…IYPI, LQQV…SAIV, VLWL…HYMA, SVTS…INLI, and WVLV…SWYF.

Belongs to the major facilitator superfamily. Proton-dependent oligopeptide transporter (POT/PTR) (TC 2.A.17) family. As to expression, expressed in roots.

It localises to the membrane. Functionally, transporter involved in a passive nitrate efflux. This Arabidopsis thaliana (Mouse-ear cress) protein is Protein NRT1/ PTR FAMILY 2.1 (NPF2.1).